Consider the following 291-residue polypeptide: Ribosomal RNA small subunit methyltransferase I (291 aa).

It belongs to the methyltransferase superfamily. RsmI family.

It is found in the cytoplasm. It carries out the reaction cytidine(1402) in 16S rRNA + S-adenosyl-L-methionine = 2'-O-methylcytidine(1402) in 16S rRNA + S-adenosyl-L-homocysteine + H(+). Its function is as follows. Catalyzes the 2'-O-methylation of the ribose of cytidine 1402 (C1402) in 16S rRNA. The chain is Ribosomal RNA small subunit methyltransferase I from Neisseria meningitidis serogroup B (strain ATCC BAA-335 / MC58).